Consider the following 148-residue polypeptide: Hemoglobin subunit alpha (148 aa).

An N-acetylserine modification is found at Ser1. A Globin domain is found at 8–148 (DYSAADRAEL…VCHELSSRYR (141 aa)). Residue His66 coordinates O2. His95 lines the heme b pocket.

The protein belongs to the globin family. In terms of assembly, heterotetramer of two alpha chains and two beta chains. In terms of tissue distribution, red blood cells.

Involved in oxygen transport from the lung to the various peripheral tissues. This is Hemoglobin subunit alpha (HBA) from Heterodontus portusjacksoni (Port Jackson shark).